The following is a 284-amino-acid chain: Bifunctional protein FolD (284 aa).

NADP(+) is bound by residues 166–168, Ser-191, and Ile-232; that span reads GAS.

It belongs to the tetrahydrofolate dehydrogenase/cyclohydrolase family. In terms of assembly, homodimer.

The catalysed reaction is (6R)-5,10-methylene-5,6,7,8-tetrahydrofolate + NADP(+) = (6R)-5,10-methenyltetrahydrofolate + NADPH. It carries out the reaction (6R)-5,10-methenyltetrahydrofolate + H2O = (6R)-10-formyltetrahydrofolate + H(+). It participates in one-carbon metabolism; tetrahydrofolate interconversion. Catalyzes the oxidation of 5,10-methylenetetrahydrofolate to 5,10-methenyltetrahydrofolate and then the hydrolysis of 5,10-methenyltetrahydrofolate to 10-formyltetrahydrofolate. In Neisseria meningitidis serogroup B (strain ATCC BAA-335 / MC58), this protein is Bifunctional protein FolD.